We begin with the raw amino-acid sequence, 420 residues long: Threonine aspartase 1 (420 aa).

The interval 1–23 (MTMEKGMSSGEGLPSRSSQVSAG) is disordered. The active-site Nucleophile is Thr-234.

It belongs to the Ntn-hydrolase family. In terms of assembly, intramolecular proteolysis generates 2 subunits, alpha and beta, which reassemble through a non-covalent association to form the fully active enzyme.

In terms of biological role, protease responsible for KMT2A/MLL1 processing and activation. It also activates KMT2D/MLL2. Through substrate activation, it controls the expression of HOXA genes, and the expression of key cell cycle regulators including CCNA1, CCNB1, CCNE1 and CDKN2A. The sequence is that of Threonine aspartase 1 (TASP1) from Homo sapiens (Human).